A 391-amino-acid polypeptide reads, in one-letter code: MGASERSVFRVLIRALTERMFKHLRRWFITHIFGRSRQRARLVSKEGRCNIEFGNVDAQSRFIFFVDIWTTVLDLKWRYKMTVFITAFLGSWFLFGLLWYVVAYVHKDLPEFYPPDNRTPCVENINGMTSAFLFSLETQVTIGYGFRFVTEQCATAIFLLIFQSILGVIINSFMCGAILAKISRPKKRAKTITFSKNAVISKRGGKLCLLIRVANLRKSLLIGSHIYGKLLKTTITPEGETIILDQTNINFVVDAGNENLFFISPLTIYHIIDHNSPFFHMAAETLSQQDFELVVFLDGTVESTSATCQVRTSYVPEEVLWGYRFVPIVSKTKEGKYRVDFHNFGKTVEVETPHCAMCLYNEKDARARMKRGYDNPNFVLSEVDETDDTQM.

The Cytoplasmic segment spans residues 1 to 77 (MGASERSVFR…IWTTVLDLKW (77 aa)). S44 carries the post-translational modification Phosphoserine; by SGK1. The helical transmembrane segment at 78–102 (RYKMTVFITAFLGSWFLFGLLWYVV) threads the bilayer. The Extracellular segment spans residues 103–127 (AYVHKDLPEFYPPDNRTPCVENING). The N-linked (GlcNAc...) asparagine glycan is linked to N117. An intramembrane region (helical; Pore-forming) is located at residues 128–139 (MTSAFLFSLETQ). The pore-forming intramembrane region spans 140-146 (VTIGYGF). A Selectivity filter motif is present at residues 141–146 (TIGYGF). Over 147-155 (RFVTEQCAT) the chain is Extracellular. The helical transmembrane segment at 156–177 (AIFLLIFQSILGVIINSFMCGA) threads the bilayer. Over 178-391 (ILAKISRPKK…EVDETDDTQM (214 aa)) the chain is Cytoplasmic. A polyphosphoinositide (PIP2)-binding region spans residues 180–207 (AKISRPKKRAKTITFSKNAVISKRGGKL). 223 to 230 (GSHIYGKL) is an ATP binding site.

It belongs to the inward rectifier-type potassium channel (TC 1.A.2.1) family. KCNJ1 subfamily. As to quaternary structure, interacts with SGK1 and SLC9A3R2/NHERF2. In terms of processing, phosphorylation at Ser-44 by SGK1 is necessary for its expression at the cell membrane. Mainly in kidney (renal cortex, medulla and papilla). As to expression, kidney.

It localises to the cell membrane. It catalyses the reaction K(+)(in) = K(+)(out). Its activity is regulated as follows. Inhibited by WNK3. Activated by phosphatidylinositol 4,5 biphosphate (PtdIns(4,5)P2). Functionally, inward rectifier potassium channels are characterized by a greater tendency to allow potassium to flow into the cell rather than out of it. Their voltage dependence is regulated by the concentration of extracellular potassium; as external potassium is raised, the voltage range of the channel opening shifts to more positive voltages. The inward rectification is mainly due to the blockage of outward current by internal magnesium. This channel is activated by internal ATP and can be blocked by external barium. In the kidney, probably plays a major role in potassium homeostasis. Inward rectifier potassium channels are characterized by a greater tendency to allow potassium to flow into the cell rather than out of it. Their voltage dependence is regulated by the concentration of extracellular potassium; as external potassium is raised, the voltage range of the channel opening shifts to more positive voltages. This chain is ATP-sensitive inward rectifier potassium channel 1 (Kcnj1), found in Rattus norvegicus (Rat).